The sequence spans 582 residues: ATP-dependent lipid A-core flippase (582 aa).

5 consecutive transmembrane segments (helical) span residues L16–L36, V63–Y83, I153–V173, P253–P273, and V275–M295. The ABC transmembrane type-1 domain maps to I28–R310. Positions V342–M578 constitute an ABC transporter domain. Residue G376–S383 coordinates ATP.

The protein belongs to the ABC transporter superfamily. Lipid exporter (TC 3.A.1.106) family. Homodimer.

Its subcellular location is the cell inner membrane. The catalysed reaction is ATP + H2O + lipid A-core oligosaccharideSide 1 = ADP + phosphate + lipid A-core oligosaccharideSide 2.. Involved in lipopolysaccharide (LPS) biosynthesis. Translocates lipid A-core from the inner to the outer leaflet of the inner membrane. Transmembrane domains (TMD) form a pore in the inner membrane and the ATP-binding domain (NBD) is responsible for energy generation. The chain is ATP-dependent lipid A-core flippase from Escherichia coli O157:H7.